A 300-amino-acid chain; its full sequence is Ribosomal RNA small subunit methyltransferase H (300 aa).

S-adenosyl-L-methionine contacts are provided by residues 46 to 48, D65, F92, D107, and Q114; that span reads GGH.

The protein belongs to the methyltransferase superfamily. RsmH family.

The protein localises to the cytoplasm. The enzyme catalyses cytidine(1402) in 16S rRNA + S-adenosyl-L-methionine = N(4)-methylcytidine(1402) in 16S rRNA + S-adenosyl-L-homocysteine + H(+). Specifically methylates the N4 position of cytidine in position 1402 (C1402) of 16S rRNA. In Prochlorococcus marinus (strain MIT 9301), this protein is Ribosomal RNA small subunit methyltransferase H.